The following is a 952-amino-acid chain: GATA zinc finger domain-containing protein 5 (952 aa).

Disordered regions lie at residues methionine 1 to serine 36 and proline 138 to glutamine 197. The span at glutamine 10–serine 24 shows a compositional bias: polar residues. Positions serine 148 to alanine 157 are enriched in pro residues. A compositionally biased stretch (low complexity) spans alanine 158–lysine 196. Residues cysteine 241 to cysteine 266 form a GATA-type zinc finger. Disordered stretches follow at residues methionine 380–proline 418, leucine 433–glycine 478, glutamine 634–asparagine 699, and glutamine 732–asparagine 816. The segment covering lysine 393–histidine 412 has biased composition (basic residues). Residues serine 445 to asparagine 467 are compositionally biased toward low complexity. Over residues serine 468–glycine 478 the composition is skewed to gly residues. Positions glutamine 634–leucine 653 are enriched in polar residues. 3 stretches are compositionally biased toward low complexity: residues asparagine 654–lysine 668, asparagine 678–asparagine 699, and glutamine 732–glutamine 745. The segment covering asparagine 746–glycine 762 has biased composition (polar residues). Positions threonine 763–serine 814 are enriched in low complexity.

The polypeptide is GATA zinc finger domain-containing protein 5 (gtaE) (Dictyostelium discoideum (Social amoeba)).